The following is a 616-amino-acid chain: UDP-sugar pyrophosphorylase (616 aa).

The protein belongs to the USP family. Requires Mg(2+) as cofactor. The cofactor is Mn(2+).

It carries out the reaction a monosaccharide 1-phosphate + UTP + H(+) = a UDP-monosaccharide + diphosphate. May function as the terminal enzyme of the myo-inositol oxidation (MIO) pathway. May also play a role in the salvage pathway for synthesis of nucleotide sugars. This Oryza sativa subsp. japonica (Rice) protein is UDP-sugar pyrophosphorylase (USP).